The sequence spans 906 residues: Protein translocase subunit SecA (906 aa).

Residues Gln-86, 104 to 108 (GEGKT), and Asp-499 contribute to the ATP site. The tract at residues 863-887 (PVVSRIDPKDRNPDDPTSWGRVSRN) is disordered. Zn(2+) contacts are provided by Cys-890, Cys-892, Cys-901, and His-902.

Belongs to the SecA family. As to quaternary structure, monomer and homodimer. Part of the essential Sec protein translocation apparatus which comprises SecA, SecYEG and auxiliary proteins SecDF-YajC and YidC. Zn(2+) is required as a cofactor.

It localises to the cell inner membrane. It is found in the cytoplasm. It carries out the reaction ATP + H2O + cellular proteinSide 1 = ADP + phosphate + cellular proteinSide 2.. Functionally, part of the Sec protein translocase complex. Interacts with the SecYEG preprotein conducting channel. Has a central role in coupling the hydrolysis of ATP to the transfer of proteins into and across the cell membrane, serving both as a receptor for the preprotein-SecB complex and as an ATP-driven molecular motor driving the stepwise translocation of polypeptide chains across the membrane. The polypeptide is Protein translocase subunit SecA (Rickettsia rickettsii (strain Iowa)).